Consider the following 205-residue polypeptide: Large ribosomal subunit protein uL4 (205 aa).

The disordered stretch occupies residues 47–70 (TRAQKSRAEVSGGGKKPFRQKGTG).

It belongs to the universal ribosomal protein uL4 family. As to quaternary structure, part of the 50S ribosomal subunit.

Functionally, one of the primary rRNA binding proteins, this protein initially binds near the 5'-end of the 23S rRNA. It is important during the early stages of 50S assembly. It makes multiple contacts with different domains of the 23S rRNA in the assembled 50S subunit and ribosome. Forms part of the polypeptide exit tunnel. The protein is Large ribosomal subunit protein uL4 of Acinetobacter baylyi (strain ATCC 33305 / BD413 / ADP1).